The following is a 211-amino-acid chain: Uracil phosphoribosyltransferase (211 aa).

Residues Arg79, Arg104, and 131-139 (DPMLATGGS) contribute to the 5-phospho-alpha-D-ribose 1-diphosphate site. Residues Ile196 and 201-203 (GDA) contribute to the uracil site. Asp202 is a binding site for 5-phospho-alpha-D-ribose 1-diphosphate.

This sequence belongs to the UPRTase family. Mg(2+) is required as a cofactor.

It carries out the reaction UMP + diphosphate = 5-phospho-alpha-D-ribose 1-diphosphate + uracil. It participates in pyrimidine metabolism; UMP biosynthesis via salvage pathway; UMP from uracil: step 1/1. Allosterically activated by GTP. Functionally, catalyzes the conversion of uracil and 5-phospho-alpha-D-ribose 1-diphosphate (PRPP) to UMP and diphosphate. The sequence is that of Uracil phosphoribosyltransferase from Lactococcus lactis subsp. cremoris (strain SK11).